Reading from the N-terminus, the 183-residue chain is Glutathione-regulated potassium-efflux system ancillary protein KefG (183 aa).

The protein belongs to the NAD(P)H dehydrogenase (quinone) family. KefG subfamily. As to quaternary structure, interacts with KefB.

The protein localises to the cell inner membrane. The enzyme catalyses a quinone + NADH + H(+) = a quinol + NAD(+). The catalysed reaction is a quinone + NADPH + H(+) = a quinol + NADP(+). Functionally, regulatory subunit of a potassium efflux system that confers protection against electrophiles. Required for full activity of KefB. The chain is Glutathione-regulated potassium-efflux system ancillary protein KefG from Serratia proteamaculans (strain 568).